The sequence spans 482 residues: Rhamnulokinase (482 aa).

ATP is bound at residue 13–17 (ASSGR). Residues glycine 83 and 232-234 (HDT) contribute to the substrate site. The Proton acceptor role is filled by aspartate 233. Threonine 255 contacts ATP. A substrate-binding site is contributed by asparagine 292. Asparagine 300 contributes to the ATP binding site. The cysteines at positions 349 and 366 are disulfide-linked. Glycine 398 provides a ligand contact to ATP. Cysteine 409 and cysteine 413 are oxidised to a cystine.

Belongs to the rhamnulokinase family. Mg(2+) serves as cofactor.

The catalysed reaction is L-rhamnulose + ATP = L-rhamnulose 1-phosphate + ADP + H(+). The protein operates within carbohydrate degradation; L-rhamnose degradation; glycerone phosphate from L-rhamnose: step 2/3. In terms of biological role, involved in the catabolism of L-rhamnose (6-deoxy-L-mannose). Catalyzes the transfer of the gamma-phosphate group from ATP to the 1-hydroxyl group of L-rhamnulose to yield L-rhamnulose 1-phosphate. The chain is Rhamnulokinase from Mannheimia succiniciproducens (strain KCTC 0769BP / MBEL55E).